A 37-amino-acid chain; its full sequence is Large ribosomal subunit protein bL36 (37 aa).

The protein belongs to the bacterial ribosomal protein bL36 family.

In Nocardioides sp. (strain ATCC BAA-499 / JS614), this protein is Large ribosomal subunit protein bL36.